Here is a 520-residue protein sequence, read N- to C-terminus: NAD(P)H-quinone oxidoreductase subunit 2 (520 aa).

14 helical membrane passes run 15–35 (ILPE…DLIL), 42–62 (WIGY…YFQW), 79–99 (LSII…LMSI), 106–126 (GTAL…GMFV), 132–152 (LVMI…LTGY), 167–187 (LLIG…LYGL), 210–230 (LGAV…ISAA), 244–264 (PTPV…ALAI), 280–300 (FVFT…ALAQ), 306–326 (MLAY…IAGT), 334–354 (IFYL…IILF), 378–398 (LGLS…GFFG), 400–420 (IYLF…LGLV), and 466–486 (VGLV…NPLF).

It belongs to the complex I subunit 2 family. NDH-1 can be composed of about 15 different subunits; different subcomplexes with different compositions have been identified which probably have different functions.

The protein localises to the cellular thylakoid membrane. It carries out the reaction a plastoquinone + NADH + (n+1) H(+)(in) = a plastoquinol + NAD(+) + n H(+)(out). It catalyses the reaction a plastoquinone + NADPH + (n+1) H(+)(in) = a plastoquinol + NADP(+) + n H(+)(out). NDH-1 shuttles electrons from an unknown electron donor, via FMN and iron-sulfur (Fe-S) centers, to quinones in the respiratory and/or the photosynthetic chain. The immediate electron acceptor for the enzyme in this species is believed to be plastoquinone. Couples the redox reaction to proton translocation, and thus conserves the redox energy in a proton gradient. Cyanobacterial NDH-1 also plays a role in inorganic carbon-concentration. In Nostoc sp. (strain PCC 7120 / SAG 25.82 / UTEX 2576), this protein is NAD(P)H-quinone oxidoreductase subunit 2.